Here is a 214-residue protein sequence, read N- to C-terminus: Pyridoxine/pyridoxamine 5'-phosphate oxidase (214 aa).

Residues 8–11 and Lys-66 each bind substrate; that span reads RTNY. Residues 61–66, 76–77, Arg-82, Lys-83, and Gln-105 each bind FMN; these read RIVLIK and FT. Substrate contacts are provided by Tyr-123, Arg-127, and Ser-131. Residues 140-141 and Trp-184 each bind FMN; that span reads QS. 190-192 provides a ligand contact to substrate; sequence RLH. Position 194 (Arg-194) interacts with FMN.

Belongs to the pyridoxamine 5'-phosphate oxidase family. In terms of assembly, homodimer. Requires FMN as cofactor.

The enzyme catalyses pyridoxamine 5'-phosphate + O2 + H2O = pyridoxal 5'-phosphate + H2O2 + NH4(+). It catalyses the reaction pyridoxine 5'-phosphate + O2 = pyridoxal 5'-phosphate + H2O2. It participates in cofactor metabolism; pyridoxal 5'-phosphate salvage; pyridoxal 5'-phosphate from pyridoxamine 5'-phosphate: step 1/1. It functions in the pathway cofactor metabolism; pyridoxal 5'-phosphate salvage; pyridoxal 5'-phosphate from pyridoxine 5'-phosphate: step 1/1. Catalyzes the oxidation of either pyridoxine 5'-phosphate (PNP) or pyridoxamine 5'-phosphate (PMP) into pyridoxal 5'-phosphate (PLP). This Burkholderia mallei (strain NCTC 10247) protein is Pyridoxine/pyridoxamine 5'-phosphate oxidase.